Here is a 366-residue protein sequence, read N- to C-terminus: Major outer membrane protein (366 aa).

Residues 1–21 form the signal peptide; the sequence is MKKTLLATAIAGAMAASGAQA.

The protein belongs to the Gram-negative porin family. Homotrimer.

It is found in the cell outer membrane. The protein is Major outer membrane protein of Halomonas elongata (strain ATCC 33173 / DSM 2581 / NBRC 15536 / NCIMB 2198 / 1H9).